The sequence spans 345 residues: Protein RecA (345 aa).

65 to 72 (GPESSGKT) is a binding site for ATP.

It belongs to the RecA family.

The protein localises to the cytoplasm. In terms of biological role, can catalyze the hydrolysis of ATP in the presence of single-stranded DNA, the ATP-dependent uptake of single-stranded DNA by duplex DNA, and the ATP-dependent hybridization of homologous single-stranded DNAs. It interacts with LexA causing its activation and leading to its autocatalytic cleavage. In Sulfurimonas denitrificans (strain ATCC 33889 / DSM 1251) (Thiomicrospira denitrificans (strain ATCC 33889 / DSM 1251)), this protein is Protein RecA.